The sequence spans 130 residues: Small ribosomal subunit protein uS9 (130 aa).

A disordered region spans residues 104–130 (LTRDPRMKERKKYGLKKARRAPQFSKR). Over residues 111–130 (KERKKYGLKKARRAPQFSKR) the composition is skewed to basic residues.

It belongs to the universal ribosomal protein uS9 family.

This chain is Small ribosomal subunit protein uS9, found in Ruminiclostridium cellulolyticum (strain ATCC 35319 / DSM 5812 / JCM 6584 / H10) (Clostridium cellulolyticum).